A 385-amino-acid polypeptide reads, in one-letter code: Flap endonuclease 1 (385 aa).

The interval 1-105 (MGIKGLNAII…HELSKRSARR (105 aa)) is N-domain. Asp-34 is a binding site for Mg(2+). Positions 47 and 71 each coordinate DNA. 5 residues coordinate Mg(2+): Asp-87, Glu-156, Glu-158, Asp-177, and Asp-179. Positions 120-251 (EKLKHERRLV…VTALKLIKEH (132 aa)) are I-domain. Residue Glu-156 participates in DNA binding. 2 residues coordinate DNA: Gly-229 and Asp-231. Mg(2+) is bound at residue Asp-231. The tract at residues 338 to 346 (VQGRLDGFF) is interaction with PCNA. Residues 356–370 (LAAANAKAKSTKAGK) show a composition bias toward low complexity. Positions 356–385 (LAAANAKAKSTKAGKQATKGKVGKPGRPRK) are disordered. A compositionally biased stretch (basic residues) spans 376–385 (KVGKPGRPRK).

The protein belongs to the XPG/RAD2 endonuclease family. FEN1 subfamily. As to quaternary structure, interacts with PCNA. Three molecules of FEN1 bind to one PCNA trimer with each molecule binding to one PCNA monomer. PCNA stimulates the nuclease activity without altering cleavage specificity. Mg(2+) is required as a cofactor. In terms of processing, phosphorylated. Phosphorylation upon DNA damage induces relocalization to the nuclear plasma.

The protein localises to the nucleus. It is found in the nucleolus. It localises to the nucleoplasm. Its subcellular location is the mitochondrion. In terms of biological role, structure-specific nuclease with 5'-flap endonuclease and 5'-3' exonuclease activities involved in DNA replication and repair. During DNA replication, cleaves the 5'-overhanging flap structure that is generated by displacement synthesis when DNA polymerase encounters the 5'-end of a downstream Okazaki fragment. It enters the flap from the 5'-end and then tracks to cleave the flap base, leaving a nick for ligation. Also involved in the long patch base excision repair (LP-BER) pathway, by cleaving within the apurinic/apyrimidinic (AP) site-terminated flap. Acts as a genome stabilization factor that prevents flaps from equilibrating into structures that lead to duplications and deletions. Also possesses 5'-3' exonuclease activity on nicked or gapped double-stranded DNA, and exhibits RNase H activity. Also involved in replication and repair of rDNA and in repairing mitochondrial DNA. The chain is Flap endonuclease 1 from Lachancea thermotolerans (strain ATCC 56472 / CBS 6340 / NRRL Y-8284) (Yeast).